Consider the following 287-residue polypeptide: Shikimate dehydrogenase (NADP(+)) (287 aa).

Shikimate contacts are provided by residues 20-22 and threonine 67; that span reads SRS. The Proton acceptor role is filled by lysine 71. Glutamate 84 serves as a coordination point for NADP(+). Shikimate-binding residues include asparagine 93 and aspartate 108. NADP(+) contacts are provided by residues 132 to 136, 156 to 161, and methionine 226; these read GAGGA and NRTAAR. Tyrosine 228 is a shikimate binding site. Residue glycine 250 coordinates NADP(+).

Belongs to the shikimate dehydrogenase family. Homodimer.

The enzyme catalyses shikimate + NADP(+) = 3-dehydroshikimate + NADPH + H(+). It functions in the pathway metabolic intermediate biosynthesis; chorismate biosynthesis; chorismate from D-erythrose 4-phosphate and phosphoenolpyruvate: step 4/7. Its function is as follows. Involved in the biosynthesis of the chorismate, which leads to the biosynthesis of aromatic amino acids. Catalyzes the reversible NADPH linked reduction of 3-dehydroshikimate (DHSA) to yield shikimate (SA). This Bordetella pertussis (strain Tohama I / ATCC BAA-589 / NCTC 13251) protein is Shikimate dehydrogenase (NADP(+)).